Here is a 602-residue protein sequence, read N- to C-terminus: Elongation factor 4 (602 aa).

The tr-type G domain maps to 7–189; sequence KYIRNFSIVA…AIVNKVPAPE (183 aa). Residues 19–24 and 136–139 each bind GTP; these read DHGKST and NKID.

This sequence belongs to the TRAFAC class translation factor GTPase superfamily. Classic translation factor GTPase family. LepA subfamily.

The protein localises to the cell membrane. The catalysed reaction is GTP + H2O = GDP + phosphate + H(+). Its function is as follows. Required for accurate and efficient protein synthesis under certain stress conditions. May act as a fidelity factor of the translation reaction, by catalyzing a one-codon backward translocation of tRNAs on improperly translocated ribosomes. Back-translocation proceeds from a post-translocation (POST) complex to a pre-translocation (PRE) complex, thus giving elongation factor G a second chance to translocate the tRNAs correctly. Binds to ribosomes in a GTP-dependent manner. This chain is Elongation factor 4, found in Clostridium botulinum (strain Okra / Type B1).